Consider the following 1173-residue polypeptide: Pyruvate-flavodoxin oxidoreductase (1173 aa).

2 4Fe-4S ferredoxin-type domains span residues 681–710 and 735–766; these read NVPVWQTDKCTQCNQCAFICPHAAIRPVLI and YRLAVSPLDCSGCGNCADVCPVKGKALSMQPL. [4Fe-4S] cluster-binding residues include Cys690, Cys693, Cys696, Cys700, Cys744, Cys747, Cys750, Cys754, Cys810, Cys813, and Cys838. The span at 922 to 933 shows a compositional bias: basic and acidic residues; that stretch reads GEGTRERAEKVG. Residues 922-946 are disordered; it reads GEGTRERAEKVGDTSGFANAREKSR. Cys1075 serves as a coordination point for [4Fe-4S] cluster.

The protein belongs to the pyruvate:ferredoxin/flavodoxin oxidoreductase family. It depends on [4Fe-4S] cluster as a cofactor.

It catalyses the reaction oxidized [flavodoxin] + pyruvate + CoA + 2 H(+) = reduced [flavodoxin] + acetyl-CoA + CO2. Functionally, oxidoreductase required for the transfer of electrons from pyruvate to flavodoxin, which reduces nitrogenase. This chain is Pyruvate-flavodoxin oxidoreductase (nifJ), found in Enterobacter agglomerans (Erwinia herbicola).